A 790-amino-acid chain; its full sequence is Pentatricopeptide repeat-containing protein OTP51, chloroplastic (790 aa).

Residues 1-56 (MATTSPCAAPSPSLRCPLALSHPFASPPPPPALRLAGPKLLPGRLAVSPPPGIPAV) constitute a chloroplast transit peptide. 10 PPR repeats span residues 182-216 (NFAL…GRVP), 217-254 (AEST…GGYK), 256-296 (RLSL…NLDV), 299-333 (DVYA…GFDE), 334-368 (GIDV…GSDL), 369-403 (PVQA…NIPP), 404-438 (NVAS…DMKH), 439-469 (LMPA…CIAR), 473-507 (NRIL…GMIG), and 509-543 (NTKS…KYDV). The interval 762 to 790 (GSSIGSDGTQDTDTDSDDDMQMSDTERDE) is disordered. Residues 771-790 (QDTDTDSDDDMQMSDTERDE) show a composition bias toward acidic residues.

It belongs to the PPR family. P subfamily.

The protein resides in the plastid. It is found in the chloroplast. Promotes the splicing of group II introns in chloroplasts. Required for the splicing of intron 2 of plastid ycf3 transcripts, a factor required for the assembly of photosystem I (PSI). Involved in the splicing of atpF, ndhA, petB and rps16 chloroplastic transcripts. Required for the assembly of PSI. The polypeptide is Pentatricopeptide repeat-containing protein OTP51, chloroplastic (Oryza sativa subsp. japonica (Rice)).